We begin with the raw amino-acid sequence, 364 residues long: DNA replication and repair protein RecF (364 aa).

Position 30-37 (30-37 (GNNGMGKT)) interacts with ATP.

The protein belongs to the RecF family.

It is found in the cytoplasm. The RecF protein is involved in DNA metabolism; it is required for DNA replication and normal SOS inducibility. RecF binds preferentially to single-stranded, linear DNA. It also seems to bind ATP. This is DNA replication and repair protein RecF from Porphyromonas gingivalis (strain ATCC 33277 / DSM 20709 / CIP 103683 / JCM 12257 / NCTC 11834 / 2561).